The primary structure comprises 197 residues: MKKVIIIDASVSPSGSYTHLLLERFLATFQAKNKDVELSTWNLNELPVGQISYNTQNAGTFFSVENSDKYIDALKAAHGVIILAPMTNFNYPATLKNFIDHVFVANKTFKDKYVTKGASSGMLGNLKVVVLGSQGAPLGWYPWGDHVNSLRGLFGFAGVASFASVIIDGTKLLYKDKSKSEVVDMFAKQVDAIANEF.

Ser-10 contributes to the FMN binding site.

Belongs to the azoreductase type 1 family. As to quaternary structure, homodimer. The cofactor is FMN.

It catalyses the reaction 2 a quinone + NADH + H(+) = 2 a 1,4-benzosemiquinone + NAD(+). The catalysed reaction is N,N-dimethyl-1,4-phenylenediamine + anthranilate + 2 NAD(+) = 2-(4-dimethylaminophenyl)diazenylbenzoate + 2 NADH + 2 H(+). Functionally, quinone reductase that provides resistance to thiol-specific stress caused by electrophilic quinones. Also exhibits azoreductase activity. Catalyzes the reductive cleavage of the azo bond in aromatic azo compounds to the corresponding amines. In Mycoplasma pneumoniae (strain ATCC 29342 / M129 / Subtype 1) (Mycoplasmoides pneumoniae), this protein is FMN-dependent NADH:quinone oxidoreductase.